We begin with the raw amino-acid sequence, 731 residues long: MLCGKENNVMKMMLVYVFVLITLISCVYGNVWYDYRAIKINDQRRILLSGSIHYPRSTPEMWPDIIEKAKDSQLDVIQTYVFWNGHEPSEGKYYFEGRYDLVKFIKLIHQAGLFVHLRIGPFACAEWNFGGFPVWLKYVPGIEFRTDNGPFKEKMQVFTTKIVDMMKAEKLFHWQGGPIILNQIENEYGPVEWEIGAPGKAYTHWAAQMAQSLNAGVPWIMCKQDSDVPDNVIDTCNGFYCEGFVPKDKSKPKMWTENWTGWYTEYGKPVPYRPAEDVAFSVARFIQNGGSFMNYYMFHGGTNFETTAGRFVSTSYDYDAPLDEYGLPREPKYTHLKNLHKAIKMCEPALVSSDAKVTNLGSNQEAHVYSSNSGSCAAFLANYDPKWSVKVTFSGMEFELPAWSISILPDCKKEVYNTARVNEPSPKLHSKMTPVISNLNWQSYSDEVPTADSPGTFREKKLYEQINMTWDKSDYLWYMTDVVLDGNEGFLKKGDEPWLTVNSAGHVLHVFVNGQLQGHAYGSLAKPQLTFSQKVKMTAGVNRISLLSAVVGLANVGWHFERYNQGVLGPVTLSGLNEGTRDLTWQYWSYKIGTKGEEQQVYNSGGSSHVQWGPPAWKQPLVWYKTTFDAPGGNDPLALDLGSMGKGQAWINGQSIGRHWSNNIAKGSCNDNCNYAGTYTETKCLSDCGKSSQKWYHVPRSWLQPRGNLLVVFEEWGGDTKWVSLVKRTIA.

A signal peptide spans 1-29 (MLCGKENNVMKMMLVYVFVLITLISCVYG). Glu187 functions as the Proton donor in the catalytic mechanism. Residue Glu257 is the Nucleophile of the active site.

This sequence belongs to the glycosyl hydrolase 35 family. As to expression, senescing flower petals.

It catalyses the reaction Hydrolysis of terminal non-reducing beta-D-galactose residues in beta-D-galactosides.. This chain is Putative beta-galactosidase (CARSR12), found in Dianthus caryophyllus (Carnation).